The primary structure comprises 640 residues: 1-deoxy-D-xylulose-5-phosphate synthase (640 aa).

Thiamine diphosphate is bound by residues H79 and 120–122; that span reads AHS. Position 151 (D151) interacts with Mg(2+). Thiamine diphosphate is bound by residues 152 to 153, N180, Y289, and E371; that span reads GA. Position 180 (N180) interacts with Mg(2+).

It belongs to the transketolase family. DXPS subfamily. Homodimer. The cofactor is Mg(2+). It depends on thiamine diphosphate as a cofactor.

It carries out the reaction D-glyceraldehyde 3-phosphate + pyruvate + H(+) = 1-deoxy-D-xylulose 5-phosphate + CO2. It participates in metabolic intermediate biosynthesis; 1-deoxy-D-xylulose 5-phosphate biosynthesis; 1-deoxy-D-xylulose 5-phosphate from D-glyceraldehyde 3-phosphate and pyruvate: step 1/1. In terms of biological role, catalyzes the acyloin condensation reaction between C atoms 2 and 3 of pyruvate and glyceraldehyde 3-phosphate to yield 1-deoxy-D-xylulose-5-phosphate (DXP). The polypeptide is 1-deoxy-D-xylulose-5-phosphate synthase (Novosphingobium aromaticivorans (strain ATCC 700278 / DSM 12444 / CCUG 56034 / CIP 105152 / NBRC 16084 / F199)).